The sequence spans 227 residues: Phosphoribosylformylglycinamidine synthase subunit PurQ (227 aa).

The region spanning 2 to 226 is the Glutamine amidotransferase type-1 domain; the sequence is KFAVIQFPGS…VKAWKEEQVN (225 aa). The active-site Nucleophile is the cysteine 86. Catalysis depends on residues histidine 195 and glutamate 197.

In terms of assembly, part of the FGAM synthase complex composed of 1 PurL, 1 PurQ and 2 PurS subunits.

It localises to the cytoplasm. It catalyses the reaction N(2)-formyl-N(1)-(5-phospho-beta-D-ribosyl)glycinamide + L-glutamine + ATP + H2O = 2-formamido-N(1)-(5-O-phospho-beta-D-ribosyl)acetamidine + L-glutamate + ADP + phosphate + H(+). It carries out the reaction L-glutamine + H2O = L-glutamate + NH4(+). Its pathway is purine metabolism; IMP biosynthesis via de novo pathway; 5-amino-1-(5-phospho-D-ribosyl)imidazole from N(2)-formyl-N(1)-(5-phospho-D-ribosyl)glycinamide: step 1/2. Its function is as follows. Part of the phosphoribosylformylglycinamidine synthase complex involved in the purines biosynthetic pathway. Catalyzes the ATP-dependent conversion of formylglycinamide ribonucleotide (FGAR) and glutamine to yield formylglycinamidine ribonucleotide (FGAM) and glutamate. The FGAM synthase complex is composed of three subunits. PurQ produces an ammonia molecule by converting glutamine to glutamate. PurL transfers the ammonia molecule to FGAR to form FGAM in an ATP-dependent manner. PurS interacts with PurQ and PurL and is thought to assist in the transfer of the ammonia molecule from PurQ to PurL. The protein is Phosphoribosylformylglycinamidine synthase subunit PurQ of Listeria monocytogenes serovar 1/2a (strain ATCC BAA-679 / EGD-e).